Here is a 204-residue protein sequence, read N- to C-terminus: Large ribosomal subunit protein eL15 (204 aa).

This sequence belongs to the eukaryotic ribosomal protein eL15 family.

This is Large ribosomal subunit protein eL15 (RpL15) from Anopheles gambiae (African malaria mosquito).